Here is a 625-residue protein sequence, read N- to C-terminus: FMRFamide-activated amiloride-sensitive sodium channel (625 aa).

The Cytoplasmic segment spans residues 1–67 (MKYTSAATKP…IVTSRDTKRK (67 aa)). The chain crosses the membrane as a helical span at residues 68 to 89 (VIWALLVIAGFTAATLQLSLLV). Residues 90 to 536 (RKYLQFQVVE…LADLFADIGG (447 aa)) are Extracellular-facing. N-linked (GlcNAc...) asparagine glycans are attached at residues Asn134, Asn196, Asn303, Asn349, Asn365, Asn372, and Asn473. Residues 537–557 (TLGLWMGISVLTIMELIELVI) form a helical membrane-spanning segment. Residues 558–625 (RLTGLVFNSE…DFRRGVESPV (68 aa)) are Cytoplasmic-facing. Residues 570–591 (LPRGPTTVNNNNGSNNHSQSTS) are disordered. The segment covering 575 to 591 (TTVNNNNGSNNHSQSTS) has biased composition (low complexity).

The protein belongs to the amiloride-sensitive sodium channel (TC 1.A.6) family. In terms of tissue distribution, muscle and nervous tissue.

Its subcellular location is the membrane. In terms of biological role, FMRFamide-gated ionotropic receptor. In Cornu aspersum (Brown garden snail), this protein is FMRFamide-activated amiloride-sensitive sodium channel.